The following is an 87-amino-acid chain: MANHKSALKRNRQAAVRNARNTHIRSTMRSLVKMVRVAAASGNQEEAKTALDRAVPYIDKAATKGVIHKATASRKISRLVKLVNTVG.

Basic residues predominate over residues 1-12; that stretch reads MANHKSALKRNR. The interval 1-21 is disordered; sequence MANHKSALKRNRQAAVRNARN.

Belongs to the bacterial ribosomal protein bS20 family.

Its function is as follows. Binds directly to 16S ribosomal RNA. The sequence is that of Small ribosomal subunit protein bS20 from Syntrophotalea carbinolica (strain DSM 2380 / NBRC 103641 / GraBd1) (Pelobacter carbinolicus).